Reading from the N-terminus, the 68-residue chain is DNA-directed RNA polymerase subunit omega (68 aa).

The protein belongs to the RNA polymerase subunit omega family. In terms of assembly, the RNAP catalytic core consists of 2 alpha, 1 beta, 1 beta' and 1 omega subunit. When a sigma factor is associated with the core the holoenzyme is formed, which can initiate transcription.

It catalyses the reaction RNA(n) + a ribonucleoside 5'-triphosphate = RNA(n+1) + diphosphate. Functionally, promotes RNA polymerase assembly. Latches the N- and C-terminal regions of the beta' subunit thereby facilitating its interaction with the beta and alpha subunits. In Persephonella marina (strain DSM 14350 / EX-H1), this protein is DNA-directed RNA polymerase subunit omega.